Here is a 425-residue protein sequence, read N- to C-terminus: Histidine--tRNA ligase 1 (425 aa).

This sequence belongs to the class-II aminoacyl-tRNA synthetase family. As to quaternary structure, homodimer.

It is found in the cytoplasm. It carries out the reaction tRNA(His) + L-histidine + ATP = L-histidyl-tRNA(His) + AMP + diphosphate + H(+). The protein is Histidine--tRNA ligase 1 of Bacillus thuringiensis subsp. konkukian (strain 97-27).